The following is an 88-amino-acid chain: MSRSLKKGAYADPSLLKKVEAANASVSKKPIKTWSRRSQIFPNFVGLTFEVHNGKTFLKVYVTEDMIGHKLGEFAPTRNFKNHTEAKR.

Belongs to the universal ribosomal protein uS19 family.

Functionally, protein S19 forms a complex with S13 that binds strongly to the 16S ribosomal RNA. The chain is Small ribosomal subunit protein uS19 from Ureaplasma parvum serovar 3 (strain ATCC 27815 / 27 / NCTC 11736).